The primary structure comprises 119 residues: Acidic phospholipase A2 DE-III (119 aa).

Intrachain disulfides connect cysteine 11-cysteine 72, cysteine 26-cysteine 118, cysteine 28-cysteine 44, cysteine 43-cysteine 99, cysteine 50-cysteine 92, cysteine 60-cysteine 85, and cysteine 79-cysteine 90. 3 residues coordinate Ca(2+): tyrosine 27, glycine 29, and glycine 31. Histidine 47 is an active-site residue. Residue aspartate 48 participates in Ca(2+) binding. Aspartate 93 is a catalytic residue.

The protein belongs to the phospholipase A2 family. Group I subfamily. D49 sub-subfamily. Ca(2+) is required as a cofactor. As to expression, expressed by the venom gland.

The protein resides in the secreted. It catalyses the reaction a 1,2-diacyl-sn-glycero-3-phosphocholine + H2O = a 1-acyl-sn-glycero-3-phosphocholine + a fatty acid + H(+). Its function is as follows. PLA2 catalyzes the calcium-dependent hydrolysis of the 2-acyl groups in 3-sn-phosphoglycerides. The chain is Acidic phospholipase A2 DE-III from Naja melanoleuca (Forest cobra).